A 174-amino-acid polypeptide reads, in one-letter code: RNA pyrophosphohydrolase (174 aa).

The Nudix hydrolase domain occupies 6–149; the sequence is GYRPNVGIIL…KRDVYLGALK (144 aa). Positions 38 to 59 match the Nudix box motif; the sequence is GGIKPGESPETAMYRELYEEVG.

This sequence belongs to the Nudix hydrolase family. RppH subfamily. It depends on a divalent metal cation as a cofactor.

Functionally, accelerates the degradation of transcripts by removing pyrophosphate from the 5'-end of triphosphorylated RNA, leading to a more labile monophosphorylated state that can stimulate subsequent ribonuclease cleavage. In Neisseria meningitidis serogroup C / serotype 2a (strain ATCC 700532 / DSM 15464 / FAM18), this protein is RNA pyrophosphohydrolase.